Consider the following 238-residue polypeptide: U2 small nuclear ribonucleoprotein A' (238 aa).

LRR repeat units follow at residues 53–74 (PTHI…SRRD), 75–95 (DIHT…RLLP), and 97–118 (NVQN…QRLR). Residues 132-170 (NQVCHLANYREHVLRLVPHLETLDFQNVTAEERKSAMSF) enclose the LRRCT domain. A disordered region spans residues 167 to 189 (AMSFPRQADGDTLGPVNTAIRDN).

This sequence belongs to the U2 small nuclear ribonucleoprotein A family. In terms of assembly, belongs to the CWC complex (or CEF1-associated complex), a spliceosome sub-complex reminiscent of a late-stage spliceosome composed of the U2, U5 and U6 snRNAs and at least BUD13, BUD31, BRR2, CDC40, CEF1, CLF1, CUS1, CWC2, CWC15, CWC21, CWC22, CWC23, CWC24, CWC25, CWC27, ECM2, HSH155, IST3, ISY1, LEA1, MSL1, NTC20, PRP8, PRP9, PRP11, PRP19, PRP21, PRP22, PRP45, PRP46, SLU7, SMB1, SMD1, SMD2, SMD3, SMX2, SMX3, SNT309, SNU114, SPP2, SYF1, SYF2, RSE1 and YJU2. Interacts with MSL1.

Its subcellular location is the nucleus. In terms of biological role, involved in pre-mRNA splicing. Associates to U2 snRNA in a MSL1 dependent manner and is required for normal accumulation of U2 snRNA. Required for the spliceosome assembly and the efficient addition of U2 snRNP onto the pre-mRNA. In Saccharomyces cerevisiae (strain ATCC 204508 / S288c) (Baker's yeast), this protein is U2 small nuclear ribonucleoprotein A' (LEA1).